The chain runs to 418 residues: GTPase Obg (418 aa).

An Obg domain is found at 1-156 (MKFIDEITLN…KKLTLVLKVL (156 aa)). The OBG-type G domain maps to 157–324 (ADVGFVGKPS…LKEALWQSVK (168 aa)). GTP contacts are provided by residues 163-170 (GKPSAGKS), 188-192 (FTTLV), 209-212 (DLPG), 278-281 (NKKD), and 305-307 (SAL). Mg(2+) is bound by residues Ser170 and Thr190. The region spanning 339-417 (VFINFEADFN…IYDYEFVWGN (79 aa)) is the OCT domain.

This sequence belongs to the TRAFAC class OBG-HflX-like GTPase superfamily. OBG GTPase family. As to quaternary structure, monomer. Mg(2+) is required as a cofactor.

The protein localises to the cytoplasm. An essential GTPase which binds GTP, GDP and possibly (p)ppGpp with moderate affinity, with high nucleotide exchange rates and a fairly low GTP hydrolysis rate. Plays a role in control of the cell cycle, stress response, ribosome biogenesis and in those bacteria that undergo differentiation, in morphogenesis control. This Mycoplasmopsis pulmonis (strain UAB CTIP) (Mycoplasma pulmonis) protein is GTPase Obg.